Here is a 49-residue protein sequence, read N- to C-terminus: Omega-segestritoxin-Sf1a (49 aa).

4 cysteine pairs are disulfide-bonded: Cys-3–Cys-22, Cys-10–Cys-27, Cys-21–Cys-48, and Cys-29–Cys-46.

Expressed by the venom gland.

It is found in the secreted. Functionally, potent and selective blocker of N-type voltage-gated calcium channels (Cav2.2/CACNA1B). Also blocks vertebrate Cav2.1/CACNA1A (P/Q-type) and Cav1.2/CACNA1C (L-type) channels at very high concentration (2 micromolar). The chain is Omega-segestritoxin-Sf1a from Segestria florentina (Tube-web spider).